The primary structure comprises 285 residues: Putative pyruvate, phosphate dikinase regulatory protein (285 aa).

165–172 (GVSRTSKT) lines the ADP pocket.

It belongs to the pyruvate, phosphate/water dikinase regulatory protein family. PDRP subfamily.

The catalysed reaction is N(tele)-phospho-L-histidyl/L-threonyl-[pyruvate, phosphate dikinase] + ADP = N(tele)-phospho-L-histidyl/O-phospho-L-threonyl-[pyruvate, phosphate dikinase] + AMP + H(+). It carries out the reaction N(tele)-phospho-L-histidyl/O-phospho-L-threonyl-[pyruvate, phosphate dikinase] + phosphate + H(+) = N(tele)-phospho-L-histidyl/L-threonyl-[pyruvate, phosphate dikinase] + diphosphate. Functionally, bifunctional serine/threonine kinase and phosphorylase involved in the regulation of the pyruvate, phosphate dikinase (PPDK) by catalyzing its phosphorylation/dephosphorylation. The sequence is that of Putative pyruvate, phosphate dikinase regulatory protein from Lactobacillus delbrueckii subsp. bulgaricus (strain ATCC 11842 / DSM 20081 / BCRC 10696 / JCM 1002 / NBRC 13953 / NCIMB 11778 / NCTC 12712 / WDCM 00102 / Lb 14).